The sequence spans 170 residues: Adenine phosphoribosyltransferase (170 aa).

This sequence belongs to the purine/pyrimidine phosphoribosyltransferase family. In terms of assembly, homodimer.

Its subcellular location is the cytoplasm. The catalysed reaction is AMP + diphosphate = 5-phospho-alpha-D-ribose 1-diphosphate + adenine. It functions in the pathway purine metabolism; AMP biosynthesis via salvage pathway; AMP from adenine: step 1/1. Functionally, catalyzes a salvage reaction resulting in the formation of AMP, that is energically less costly than de novo synthesis. This is Adenine phosphoribosyltransferase from Flavobacterium johnsoniae (strain ATCC 17061 / DSM 2064 / JCM 8514 / BCRC 14874 / CCUG 350202 / NBRC 14942 / NCIMB 11054 / UW101) (Cytophaga johnsonae).